We begin with the raw amino-acid sequence, 448 residues long: Exodeoxyribonuclease 7 large subunit (448 aa).

Belongs to the XseA family. As to quaternary structure, heterooligomer composed of large and small subunits.

It is found in the cytoplasm. It catalyses the reaction Exonucleolytic cleavage in either 5'- to 3'- or 3'- to 5'-direction to yield nucleoside 5'-phosphates.. In terms of biological role, bidirectionally degrades single-stranded DNA into large acid-insoluble oligonucleotides, which are then degraded further into small acid-soluble oligonucleotides. The chain is Exodeoxyribonuclease 7 large subunit from Geobacillus kaustophilus (strain HTA426).